Reading from the N-terminus, the 147-residue chain is UPAR/Ly6 domain-containing protein CG9338 (147 aa).

The signal sequence occupies residues 1–23; the sequence is MVSSVKMILALTVLATVACTGYA. The Extracellular segment spans residues 24–126; it reads IKCYQCDSLT…VCTEDECNGT (103 aa). 5 cysteine pairs are disulfide-bonded: cysteine 26–cysteine 72, cysteine 29–cysteine 37, cysteine 51–cysteine 89, cysteine 101–cysteine 115, and cysteine 118–cysteine 123. The N-linked (GlcNAc...) asparagine glycan is linked to asparagine 68. Asparagine 124 carries GPI-anchor amidated asparagine lipidation. The propeptide at 125-147 is removed in mature form; it reads GTSSLAPIAGVILLFFGLARLLA. Residues 127–147 traverse the membrane as a helical segment; that stretch reads SSLAPIAGVILLFFGLARLLA.

It belongs to the quiver family.

It localises to the cell membrane. May be involved in regulating neuron excitability. This Drosophila melanogaster (Fruit fly) protein is UPAR/Ly6 domain-containing protein CG9338.